The chain runs to 488 residues: Membrane-bound lytic murein transglycosylase F (488 aa).

The first 25 residues, 1 to 25 (MFARPAIRMRCATGLLAIGTLLMLA), serve as a signal peptide directing secretion. The interval 26–269 (GCGEEPKPSV…RLKERYYGHV (244 aa)) is non-LT domain. Positions 270 to 488 (DVLGYVGAYT…RTLDEQTPPL (219 aa)) are LT domain. Residue Glu316 is part of the active site.

This sequence in the N-terminal section; belongs to the bacterial solute-binding protein 3 family. It in the C-terminal section; belongs to the transglycosylase Slt family.

It is found in the cell outer membrane. The catalysed reaction is Exolytic cleavage of the (1-&gt;4)-beta-glycosidic linkage between N-acetylmuramic acid (MurNAc) and N-acetylglucosamine (GlcNAc) residues in peptidoglycan, from either the reducing or the non-reducing ends of the peptidoglycan chains, with concomitant formation of a 1,6-anhydrobond in the MurNAc residue.. In terms of biological role, murein-degrading enzyme that degrades murein glycan strands and insoluble, high-molecular weight murein sacculi, with the concomitant formation of a 1,6-anhydromuramoyl product. Lytic transglycosylases (LTs) play an integral role in the metabolism of the peptidoglycan (PG) sacculus. Their lytic action creates space within the PG sacculus to allow for its expansion as well as for the insertion of various structures such as secretion systems and flagella. This is Membrane-bound lytic murein transglycosylase F from Ectopseudomonas mendocina (strain ymp) (Pseudomonas mendocina).